Here is an 89-residue protein sequence, read N- to C-terminus: Small ribosomal subunit protein uS15 (89 aa).

Belongs to the universal ribosomal protein uS15 family. In terms of assembly, part of the 30S ribosomal subunit. Forms a bridge to the 50S subunit in the 70S ribosome, contacting the 23S rRNA.

In terms of biological role, one of the primary rRNA binding proteins, it binds directly to 16S rRNA where it helps nucleate assembly of the platform of the 30S subunit by binding and bridging several RNA helices of the 16S rRNA. Functionally, forms an intersubunit bridge (bridge B4) with the 23S rRNA of the 50S subunit in the ribosome. The chain is Small ribosomal subunit protein uS15 from Bartonella quintana (strain Toulouse) (Rochalimaea quintana).